Reading from the N-terminus, the 209-residue chain is Ribosomal RNA large subunit methyltransferase E (209 aa).

The S-adenosyl-L-methionine site is built by G60, W62, D80, D96, and D121. The Proton acceptor role is filled by K161.

It belongs to the class I-like SAM-binding methyltransferase superfamily. RNA methyltransferase RlmE family.

It is found in the cytoplasm. It carries out the reaction uridine(2552) in 23S rRNA + S-adenosyl-L-methionine = 2'-O-methyluridine(2552) in 23S rRNA + S-adenosyl-L-homocysteine + H(+). Functionally, specifically methylates the uridine in position 2552 of 23S rRNA at the 2'-O position of the ribose in the fully assembled 50S ribosomal subunit. In Pseudomonas fluorescens (strain Pf0-1), this protein is Ribosomal RNA large subunit methyltransferase E.